Consider the following 543-residue polypeptide: Cytochrome P450 2U1 (543 aa).

4 consecutive transmembrane segments (helical) span residues 32–52 (PTGGALLLLVLAALLGWSWLW), 58–78 (GIPPGPAPWPVVGNFGFVLLP), 261–281 (VCLNTQLLLVNICSWLYYLPF), and 342–362 (LFYIIGDLFIAGTDTTTNSLL). Cys-490 provides a ligand contact to heme. A helical transmembrane segment spans residues 495–515 (LAKMELFLMFVSLMQSFTFVL).

Belongs to the cytochrome P450 family. It depends on heme as a cofactor.

It localises to the endoplasmic reticulum membrane. The protein localises to the microsome membrane. It is found in the mitochondrion inner membrane. It catalyses the reaction an omega-methyl-long-chain fatty acid + reduced [NADPH--hemoprotein reductase] + O2 = an omega-hydroxy-long-chain fatty acid + oxidized [NADPH--hemoprotein reductase] + H2O + H(+). The enzyme catalyses (5Z,8Z,11Z,14Z)-eicosatetraenoate + reduced [NADPH--hemoprotein reductase] + O2 = 19-hydroxy-(5Z,8Z,11Z,14Z)-eicosatetraenoate + oxidized [NADPH--hemoprotein reductase] + H2O + H(+). The catalysed reaction is (5Z,8Z,11Z,14Z)-eicosatetraenoate + reduced [NADPH--hemoprotein reductase] + O2 = 20-hydroxy-(5Z,8Z,11Z,14Z)-eicosatetraenoate + oxidized [NADPH--hemoprotein reductase] + H2O + H(+). It carries out the reaction N-[(5Z,8Z,11Z,14Z)-eicosatetraenoyl]-serotonin + reduced [NADPH--hemoprotein reductase] + O2 = 2-oxo-N-[(5Z,8Z,11Z,14Z)-eicosatetraenoyl]-serotonin + oxidized [NADPH--hemoprotein reductase] + H2O + H(+). Functionally, a cytochrome P450 monooxygenase involved in the metabolism of arachidonic acid and its conjugates. Mechanistically, uses molecular oxygen inserting one oxygen atom into a substrate, and reducing the second into a water molecule, with two electrons provided by NADPH via cytochrome P450 reductase (CPR; NADPH-ferrihemoprotein reductase). Acts as an omega and omega-1 hydroxylase for arachidonic acid and possibly for other long chain fatty acids. May modulate the arachidonic acid signaling pathway and play a role in other fatty acid signaling processes. May down-regulate the biological activities of N-arachidonoyl-serotonin, an endocannabinoid that has anti-nociceptive effects through inhibition of fatty acid amide hydrolase FAAH, TRPV1 receptor and T-type calcium channels. Catalyzes C-2 oxidation of the indole ring of N-arachidonoyl-serotonin forming a less active product 2-oxo-N-arachidonoyl-serotonin. The chain is Cytochrome P450 2U1 (CYP2U1) from Bos taurus (Bovine).